Here is a 474-residue protein sequence, read N- to C-terminus: tRNA-2-methylthio-N(6)-dimethylallyladenosine synthase (474 aa).

The MTTase N-terminal domain occupies 3–120 (KKLHIKTWGC…LPDMIDQVRR (118 aa)). Cys12, Cys49, Cys83, Cys157, Cys161, and Cys164 together coordinate [4Fe-4S] cluster. The Radical SAM core domain maps to 143-375 (RAEGPTAFVS…QDRITQQAMR (233 aa)). Residues 378 to 441 (RHMMGTVQRI…TNSLRGKFIR (64 aa)) enclose the TRAM domain.

It belongs to the methylthiotransferase family. MiaB subfamily. As to quaternary structure, monomer. [4Fe-4S] cluster serves as cofactor.

It localises to the cytoplasm. It carries out the reaction N(6)-dimethylallyladenosine(37) in tRNA + (sulfur carrier)-SH + AH2 + 2 S-adenosyl-L-methionine = 2-methylsulfanyl-N(6)-dimethylallyladenosine(37) in tRNA + (sulfur carrier)-H + 5'-deoxyadenosine + L-methionine + A + S-adenosyl-L-homocysteine + 2 H(+). Catalyzes the methylthiolation of N6-(dimethylallyl)adenosine (i(6)A), leading to the formation of 2-methylthio-N6-(dimethylallyl)adenosine (ms(2)i(6)A) at position 37 in tRNAs that read codons beginning with uridine. The chain is tRNA-2-methylthio-N(6)-dimethylallyladenosine synthase from Shewanella sp. (strain ANA-3).